Consider the following 1172-residue polypeptide: DNA-directed RNA polymerase subunit beta (1172 aa).

This sequence belongs to the RNA polymerase beta chain family. The RNAP catalytic core consists of 2 alpha, 1 beta, 1 beta' and 1 omega subunit. When a sigma factor is associated with the core the holoenzyme is formed, which can initiate transcription.

It catalyses the reaction RNA(n) + a ribonucleoside 5'-triphosphate = RNA(n+1) + diphosphate. In terms of biological role, DNA-dependent RNA polymerase catalyzes the transcription of DNA into RNA using the four ribonucleoside triphosphates as substrates. This is DNA-directed RNA polymerase subunit beta from Mycobacterium sp. (strain KMS).